The chain runs to 465 residues: WASH complex subunit 1 (465 aa).

The required for WASH complex assembly stretch occupies residues 1 to 54 (MTPVRMQHSLAGQTYAVPFIQPDLRREEAVQQMADALQYLQKVSGDIFSRISQQ). The segment at 1-167 (MTPVRMQHSL…EGLGGLPSNI (167 aa)) is WHD1. Lysine 220 is covalently cross-linked (Glycyl lysine isopeptide (Lys-Gly) (interchain with G-Cter in ubiquitin)). Disordered stretches follow at residues 297–359 (QDGV…VDPS), 376–407 (GKAK…QGGH), and 423–465 (ISGK…DWES). Residues 302-314 (TPPPPPPPPPPAP) show a composition bias toward pro residues. The segment at 349–465 (QGAPREVVDP…AEEDEDDWES (117 aa)) is VCA. The 23-residue stretch at 361–383 (GWATLLESIRQAGGIGKAKLRSM) folds into the WH2 domain. Positions 382-398 (SMKERKLEKQQQKEQEQ) are enriched in basic and acidic residues. Residues 424 to 436 (SGKGPGAGEGPGG) show a composition bias toward gly residues. Over residues 456-465 (AEEDEDDWES) the composition is skewed to acidic residues.

It belongs to the WASH1 family. Component of the WASH core complex also described as WASH regulatory complex (SHRC) composed of WASH (WASHC1, WASH2P or WASH3P), WASHC2 (WASHC2A or WASHC2C), WASHC3, WASHC4 and WASHC5. The WASH core complex associates via WASHC2 with the F-actin-capping protein dimer (formed by CAPZA1, CAPZA2 or CAPZA3 and CAPZB) in a transient or substoichiometric manner which was initially described as WASH complex. Interacts (via WHD1 region) with WASHC2C; the interaction is direct. Interacts with VPS35; mediates the association with the retromer CSC complex. Interacts with FKBP15. Interacts with alpha-tubulin. Interacts with BECN1; this interaction can be competed out by AMBRA1 binding. Interacts with BLOC1S2; may associate with the BLOC-1 complex. Interacts with tubulin gamma chain (TUBG1 or TUBG2). Interacts with EXOC1, EXOC4, EXOC8; in MMP14-positive endosomes in breast tumor cells; indicative for an association with the exocyst complex. Interacts with TBC1D23. Ubiquitinated at Lys-220 via 'Lys-63'-linked ubiquitin chains by the TRIM27:MAGEL2 E3 ubiquitin ligase complex, leading to promote endosomal F-actin assembly.

It is found in the early endosome membrane. The protein localises to the recycling endosome membrane. It localises to the late endosome. The protein resides in the cytoplasmic vesicle. Its subcellular location is the autophagosome. It is found in the cytoplasm. The protein localises to the cytoskeleton. It localises to the microtubule organizing center. The protein resides in the centrosome. Its subcellular location is the centriole. Acts as a component of the WASH core complex that functions as a nucleation-promoting factor (NPF) at the surface of endosomes, where it recruits and activates the Arp2/3 complex to induce actin polymerization, playing a key role in the fission of tubules that serve as transport intermediates during endosome sorting. Involved in endocytic trafficking of EGF. Involved in transferrin receptor recycling. Regulates the trafficking of endosomal alpha5beta1 integrin to the plasma membrane and involved in invasive cell migration. In T-cells involved in endosome-to-membrane recycling of receptors including T-cell receptor (TCR), CD28 and ITGAL; proposed to be implicated in T cell proliferation and effector function. In dendritic cells involved in endosome-to-membrane recycling of major histocompatibility complex (MHC) class II probably involving retromer and subsequently allowing antigen sampling, loading and presentation during T-cell activation. Involved in Arp2/3 complex-dependent actin assembly driving Salmonella typhimurium invasion independent of ruffling. Involved in the exocytosis of MMP14 leading to matrix remodeling during invasive migration and implicating late endosome-to-plasma membrane tubular connections and cooperation with the exocyst complex. Involved in negative regulation of autophagy independently from its role in endosomal sorting by inhibiting BECN1 ubiquitination to inactivate PIK3C3/Vps34 activity. The sequence is that of WASH complex subunit 1 from Homo sapiens (Human).